Reading from the N-terminus, the 548-residue chain is Probable inorganic phosphate transporter 1-5 (548 aa).

Topologically, residues M1–A23 are cytoplasmic. The chain crosses the membrane as a helical span at residues V24–V44. The Extracellular segment spans residues T45–S69. The helical transmembrane segment at A70–L90 threads the bilayer. The Cytoplasmic portion of the chain corresponds to G91–K98. Residues V99 to G119 form a helical membrane-spanning segment. Over S120–K123 the chain is Extracellular. A helical transmembrane segment spans residues G124 to Y144. Residues P145–F163 are Cytoplasmic-facing. Residues I164–I184 form a helical membrane-spanning segment. The Extracellular segment spans residues V185–A210. Residues D211 to W231 form a helical membrane-spanning segment. Over R232–H303 the chain is Cytoplasmic. Residues L304–F324 traverse the membrane as a helical segment. The Extracellular segment spans residues Q325–T355. A helical membrane pass occupies residues L356–V376. Residues G377–R378 are Cytoplasmic-facing. Residues F379–P399 form a helical membrane-spanning segment. At Y400–T405 the chain is on the extracellular side. A helical transmembrane segment spans residues P406–G426. The Cytoplasmic segment spans residues P427–G449. Residues I450–A470 form a helical membrane-spanning segment. The Extracellular portion of the chain corresponds to Q471–N490. A helical transmembrane segment spans residues S491–E511. Residues S512–E548 are Cytoplasmic-facing. The segment at E518–E548 is disordered. A compositionally biased stretch (polar residues) spans A533–E548.

It belongs to the major facilitator superfamily. Phosphate:H(+) symporter (TC 2.A.1.9) family. In terms of tissue distribution, expressed at low levels in roots.

Its subcellular location is the membrane. Its function is as follows. High-affinity transporter for external inorganic phosphate. In Oryza sativa subsp. japonica (Rice), this protein is Probable inorganic phosphate transporter 1-5 (PHT1-5).